A 179-amino-acid chain; its full sequence is Large ribosomal subunit protein uL5 (179 aa).

Belongs to the universal ribosomal protein uL5 family. Part of the 50S ribosomal subunit; part of the 5S rRNA/L5/L18/L25 subcomplex. Contacts the 5S rRNA and the P site tRNA. Forms a bridge to the 30S subunit in the 70S ribosome.

Functionally, this is one of the proteins that bind and probably mediate the attachment of the 5S RNA into the large ribosomal subunit, where it forms part of the central protuberance. In the 70S ribosome it contacts protein S13 of the 30S subunit (bridge B1b), connecting the 2 subunits; this bridge is implicated in subunit movement. Contacts the P site tRNA; the 5S rRNA and some of its associated proteins might help stabilize positioning of ribosome-bound tRNAs. The protein is Large ribosomal subunit protein uL5 of Azotobacter vinelandii (strain DJ / ATCC BAA-1303).